A 455-amino-acid chain; its full sequence is Chromosomal replication initiator protein DnaA (455 aa).

Positions methionine 1–methionine 75 are domain I, interacts with DnaA modulators. Positions methionine 75–threonine 106 are domain II. Residues serine 107–alanine 321 are domain III, AAA+ region. Residues glycine 151, glycine 153, lysine 154, and threonine 155 each coordinate ATP. The tract at residues asparagine 322 to glutamate 455 is domain IV, binds dsDNA.

The protein belongs to the DnaA family. In terms of assembly, oligomerizes as a right-handed, spiral filament on DNA at oriC.

The protein resides in the cytoplasm. Functionally, plays an essential role in the initiation and regulation of chromosomal replication. ATP-DnaA binds to the origin of replication (oriC) to initiate formation of the DNA replication initiation complex once per cell cycle. Binds the DnaA box (a 9 base pair repeat at the origin) and separates the double-stranded (ds)DNA. Forms a right-handed helical filament on oriC DNA; dsDNA binds to the exterior of the filament while single-stranded (ss)DNA is stabiized in the filament's interior. The ATP-DnaA-oriC complex binds and stabilizes one strand of the AT-rich DNA unwinding element (DUE), permitting loading of DNA polymerase. After initiation quickly degrades to an ADP-DnaA complex that is not apt for DNA replication. Binds acidic phospholipids. The chain is Chromosomal replication initiator protein DnaA from Helicobacter pylori (strain Shi470).